A 175-amino-acid polypeptide reads, in one-letter code: Lithostathine (175 aa).

The first 26 residues, 1–26 (MLPSLGLPRLSWMLLSCLMLLSQIQG), serve as a signal peptide directing secretion. Residues 27–37 (ENSQKELPSAR) constitute a propeptide that is removed on maturation. In terms of domain architecture, C-type lectin spans 38-173 (ISCPSGSMAY…NLNLPYVCKF (136 aa)). Intrachain disulfides connect cysteine 40–cysteine 51, cysteine 68–cysteine 171, and cysteine 146–cysteine 163.

As to quaternary structure, cleaved to give an A chain and a B chain joined by a disulfide bond. In pancreatic acinar cells.

It localises to the secreted. In terms of biological role, might act as an inhibitor of spontaneous calcium carbonate precipitation. The protein is Lithostathine (PTP) of Bos taurus (Bovine).